Reading from the N-terminus, the 208-residue chain is Small ribosomal subunit protein uS5 (208 aa).

Residues 1 to 19 are compositionally biased toward polar residues; that stretch reads MTDSNNQSPNKKTSGSSGA. A disordered region spans residues 1-54; sequence MTDSNNQSPNKKTSGSSGAPTAADGRQENRRSRGEKRGGRRDRRGQERDSEWQE. 2 stretches are compositionally biased toward basic and acidic residues: residues 25-37 and 44-54; these read GRQENRRSRGEKR and RGQERDSEWQE. The S5 DRBM domain maps to 52–115; the sequence is WQERVVQIRR…ADGKKHLVRV (64 aa).

This sequence belongs to the universal ribosomal protein uS5 family. Part of the 30S ribosomal subunit. Contacts proteins S4 and S8.

With S4 and S12 plays an important role in translational accuracy. In terms of biological role, located at the back of the 30S subunit body where it stabilizes the conformation of the head with respect to the body. The polypeptide is Small ribosomal subunit protein uS5 (Prochlorococcus marinus (strain NATL1A)).